Reading from the N-terminus, the 391-residue chain is UPF0328 protein ECU06_1650 (391 aa).

It belongs to the UPF0328 family.

In Encephalitozoon cuniculi (strain GB-M1) (Microsporidian parasite), this protein is UPF0328 protein ECU06_1650.